We begin with the raw amino-acid sequence, 340 residues long: Phenylalanine--tRNA ligase alpha subunit (340 aa).

A Mg(2+)-binding site is contributed by glutamate 258.

This sequence belongs to the class-II aminoacyl-tRNA synthetase family. Phe-tRNA synthetase alpha subunit type 1 subfamily. In terms of assembly, tetramer of two alpha and two beta subunits. Mg(2+) is required as a cofactor.

It localises to the cytoplasm. It catalyses the reaction tRNA(Phe) + L-phenylalanine + ATP = L-phenylalanyl-tRNA(Phe) + AMP + diphosphate + H(+). This is Phenylalanine--tRNA ligase alpha subunit from Corynebacterium glutamicum (strain ATCC 13032 / DSM 20300 / JCM 1318 / BCRC 11384 / CCUG 27702 / LMG 3730 / NBRC 12168 / NCIMB 10025 / NRRL B-2784 / 534).